A 55-amino-acid polypeptide reads, in one-letter code: Neurotoxin BmKX-A1-S31 (55 aa).

The first 23 residues, methionine 1–glycine 23, serve as a signal peptide directing secretion. Cystine bridges form between cysteine 30–cysteine 45, cysteine 36–cysteine 50, and cysteine 39–cysteine 53.

As to expression, expressed by the venom gland.

It is found in the secreted. This chain is Neurotoxin BmKX-A1-S31, found in Olivierus martensii (Manchurian scorpion).